Consider the following 335-residue polypeptide: Auxin-responsive protein IAA6 (335 aa).

The EAR-like (transcriptional repression) motif lies at 51–55 (LKLGL). Disordered regions lie at residues 81–102 (LSFFPKHSKTTSSTTTTTGAKR), 143–180 (KKGCCPPPPPPHGAPATPARNRPQTQGRGAAAPVVGWP), and 188–207 (NLASSSSSKHSPEPQNDNAN). Residues 217–321 (NPLVKINMDG…TAKRLRVLRS (105 aa)) enclose the PB1 domain.

It belongs to the Aux/IAA family. As to quaternary structure, homodimers and heterodimers. As to expression, highly expressed in roots. Expressed in shoots and flowers.

It localises to the nucleus. In terms of biological role, aux/IAA proteins are short-lived transcriptional factors that function as repressors of early auxin response genes at low auxin concentrations. This is Auxin-responsive protein IAA6 (IAA6) from Oryza sativa subsp. japonica (Rice).